Consider the following 218-residue polypeptide: MDSGKEGEAPAATSSPESRRTRSNGKVKAFADAAPPSATVVSTKATPLPRGGWKKGVAILDFIIRLGAIGSALGAAAIMGNSEQILPFFTQFFQFHAQWDDFPMFQFFVFANGAAGGFLILSLPFSIVCIVRPYTVGPRLLLVILDILMMALVMAAASSAAAVVYLAHNGSQDANWIAICQQFTDFCQVTSEAVVASFVAAFLLICLIVVSSVALKRG.

The tract at residues 1–26 (MDSGKEGEAPAATSSPESRRTRSNGK) is disordered. The Cytoplasmic portion of the chain corresponds to 1–58 (MDSGKEGEAPAATSSPESRRTRSNGKVKAFADAAPPSATVVSTKATPLPRGGWKKGVA). The chain crosses the membrane as a helical span at residues 59–79 (ILDFIIRLGAIGSALGAAAIM). Over 80-106 (GNSEQILPFFTQFFQFHAQWDDFPMFQ) the chain is Extracellular. A helical membrane pass occupies residues 107 to 127 (FFVFANGAAGGFLILSLPFSI). Residues 128-139 (VCIVRPYTVGPR) are Cytoplasmic-facing. Residues 140–160 (LLLVILDILMMALVMAAASSA) traverse the membrane as a helical segment. Topologically, residues 161–192 (AAVVYLAHNGSQDANWIAICQQFTDFCQVTSE) are extracellular. Residue N169 is glycosylated (N-linked (GlcNAc...) asparagine). Residues 193–213 (AVVASFVAAFLLICLIVVSSV) form a helical membrane-spanning segment. The Cytoplasmic segment spans residues 214-218 (ALKRG).

Belongs to the Casparian strip membrane proteins (CASP) family. Homodimer and heterodimers.

It localises to the cell membrane. Regulates membrane-cell wall junctions and localized cell wall deposition. Required for establishment of the Casparian strip membrane domain (CSD) and the subsequent formation of Casparian strips, a cell wall modification of the root endodermis that determines an apoplastic barrier between the intraorganismal apoplasm and the extraorganismal apoplasm and prevents lateral diffusion. The polypeptide is Casparian strip membrane protein 5 (Glycine max (Soybean)).